The chain runs to 257 residues: Transcription factor bHLH55 (257 aa).

The bHLH domain occupies 74 to 126; that stretch reads NKRAKHKELERQRRQENTSLFKILRYLLPSQYIKGKRSSADHVLEAVNYIKDL.

As to quaternary structure, homodimer. As to expression, expressed in roots, leaves, stems, and flowers.

The protein resides in the nucleus. This is Transcription factor bHLH55 (BHLH55) from Arabidopsis thaliana (Mouse-ear cress).